A 283-amino-acid polypeptide reads, in one-letter code: Release factor glutamine methyltransferase (283 aa).

Positions 143 and 189 each coordinate S-adenosyl-L-methionine. 189–192 contacts substrate; it reads NPPY.

It belongs to the protein N5-glutamine methyltransferase family. PrmC subfamily.

The enzyme catalyses L-glutaminyl-[peptide chain release factor] + S-adenosyl-L-methionine = N(5)-methyl-L-glutaminyl-[peptide chain release factor] + S-adenosyl-L-homocysteine + H(+). Functionally, methylates the class 1 translation termination release factors RF1/PrfA and RF2/PrfB on the glutamine residue of the universally conserved GGQ motif. This is Release factor glutamine methyltransferase from Clostridium botulinum (strain Hall / ATCC 3502 / NCTC 13319 / Type A).